A 536-amino-acid polypeptide reads, in one-letter code: Pre-mRNA-splicing factor SLU7 (536 aa).

Residues Glu-22–Pro-42 form a disordered region. The CCHC-type zinc-finger motif lies at Gly-94–Glu-111. The tract at residues Lys-178 to Gly-201 is disordered. Over residues Lys-182–Asp-200 the composition is skewed to acidic residues.

The protein belongs to the SLU7 family.

The protein localises to the nucleus. In terms of biological role, participates in the second catalytic step of pre-mRNA splicing, when the free hydroxyl group of exon I attacks the 3'-splice site to generate spliced mRNA and the excised lariat intron. The sequence is that of Pre-mRNA-splicing factor SLU7 from Oryza sativa subsp. indica (Rice).